We begin with the raw amino-acid sequence, 253 residues long: Ubiquinone/menaquinone biosynthesis C-methyltransferase UbiE (253 aa).

S-adenosyl-L-methionine is bound by residues T76, D97, and D125–A126.

Belongs to the class I-like SAM-binding methyltransferase superfamily. MenG/UbiE family.

It carries out the reaction a 2-demethylmenaquinol + S-adenosyl-L-methionine = a menaquinol + S-adenosyl-L-homocysteine + H(+). The enzyme catalyses a 2-methoxy-6-(all-trans-polyprenyl)benzene-1,4-diol + S-adenosyl-L-methionine = a 5-methoxy-2-methyl-3-(all-trans-polyprenyl)benzene-1,4-diol + S-adenosyl-L-homocysteine + H(+). It functions in the pathway quinol/quinone metabolism; menaquinone biosynthesis; menaquinol from 1,4-dihydroxy-2-naphthoate: step 2/2. The protein operates within cofactor biosynthesis; ubiquinone biosynthesis. Its function is as follows. Methyltransferase required for the conversion of demethylmenaquinol (DMKH2) to menaquinol (MKH2) and the conversion of 2-polyprenyl-6-methoxy-1,4-benzoquinol (DDMQH2) to 2-polyprenyl-3-methyl-6-methoxy-1,4-benzoquinol (DMQH2). This chain is Ubiquinone/menaquinone biosynthesis C-methyltransferase UbiE, found in Azotobacter vinelandii (strain DJ / ATCC BAA-1303).